Reading from the N-terminus, the 98-residue chain is YcgL domain-containing protein Ping_1076 (98 aa).

The YcgL domain maps to 1-85 (MLCAVYKSIR…PPVNHLQEHK (85 aa)). The interval 75-98 (PPPVNHLQEHKDWKKKRQENKNEI) is disordered.

The chain is YcgL domain-containing protein Ping_1076 from Psychromonas ingrahamii (strain DSM 17664 / CCUG 51855 / 37).